Consider the following 505-residue polypeptide: Nicotinamide phosphoribosyltransferase (505 aa).

Residue Arg196 participates in diphosphate binding. Beta-nicotinamide D-ribonucleotide is bound at residue Asp219. Diphosphate-binding residues include His246 and Arg314. Residues 314-316, 369-370, and Arg408 each bind beta-nicotinamide D-ribonucleotide; these read RPD and GD.

Belongs to the NAPRTase family.

The catalysed reaction is beta-nicotinamide D-ribonucleotide + diphosphate = 5-phospho-alpha-D-ribose 1-diphosphate + nicotinamide + H(+). The protein operates within cofactor biosynthesis; NAD(+) biosynthesis; nicotinamide D-ribonucleotide from 5-phospho-alpha-D-ribose 1-diphosphate and nicotinamide: step 1/1. 10-fold more active in the presence of saturating ATP. Its function is as follows. Catalyzes the condensation of nicotinamide with 5-phosphoribosyl-1-pyrophosphate to yield nicotinamide mononucleotide, an intermediate in the biosynthesis of NAD. Functions in the nondeamidating salvage pathway for production of NAD from nicotinamide. Displays a strict preference for nicotinamide over nicotinate substrate. The protein is Nicotinamide phosphoribosyltransferase of Acinetobacter baylyi (strain ATCC 33305 / BD413 / ADP1).